The following is a 303-amino-acid chain: Trans-enoyl reductase tazE (303 aa).

Positions 1–26 (MTAEHDAAILPKPGGPLAVGKRATPE) are disordered. 44–49 (CDYYQR) provides a ligand contact to NADP(+). 136–143 (LAVLTALT) is a substrate binding site. NADP(+) is bound by residues 170–173 (SSSV), 193–196 (SPKH), Y211, and 246–247 (LD). A substrate-binding site is contributed by 265-269 (VLPEC).

This sequence belongs to the zinc-containing alcohol dehydrogenase family.

It functions in the pathway secondary metabolite biosynthesis. Its function is as follows. Trans-enoyl reductase; part of the gene cluster that mediates the biosynthesis of azaterrilone A and other azaphilones, a class of fungal metabolites characterized by a highly oxygenated pyrano-quinone bicyclic core and exhibiting a broad range of bioactivities. The first step of the pathway begins with the non-reducing polyketide synthase tazA that assembles one acetyl-CoA starter unit, five malonyl-CoA units, and catalyzes a series of Claisen condensations, methylation, PT-mediated cyclization, and finally releases the first hexaketide precursor through the R-domain. The tazA product then undergoes reduction on its terminal ketone and the following pyran-ring formation by yet undetermined enzyme(s). Dehydration and enoyl reduction, possibly involving the trans-enoyl reductase tazE leads to the next intermediate. TazD is predicted as an acetyltransferase and might catalyze the acetylation steps leading to the synthesis of azaterrilone A. Azaterrilone A is not the final product of the taz pathway and both the highly reducing polyketide synthase tazB and the dual enzyme tazHJ catalyze late steps of the pathway, leading to the production of the 2 final stereoisomers that contain additional polyketide modification whose structures have still to be determined. The sequence is that of Trans-enoyl reductase tazE from Aspergillus terreus (strain NIH 2624 / FGSC A1156).